The following is a 573-amino-acid chain: Solute carrier family 41 member 2 (573 aa).

Over 1–162 (MTNSKGRSIT…KESSGIMALQ (162 aa)) the chain is Extracellular. 2 positions are modified to phosphoserine: Ser136 and Ser137. Residues 163 to 183 (ILVPFLLAGFGTVSAGMVLDI) traverse the membrane as a helical segment. The Cytoplasmic portion of the chain corresponds to 184–195 (VQHWEVFRKVTE). Residues 196–216 (VFILVPALLGLKGNLEMTLAS) traverse the membrane as a helical segment. The Extracellular segment spans residues 217–245 (RLSTAVNIGKMDSPIEKWNLIIGNLALKQ). The helical transmembrane segment at 246–266 (VQATVVGFLAAVAAIILGWIP) threads the bilayer. At 267 to 282 (EGKYYLDHSILLCSSS) the chain is on the cytoplasmic side. Residues 283-303 (VATAFIASLLQGIIMVGVIVG) traverse the membrane as a helical segment. The Extracellular segment spans residues 304–313 (SKKTGINPDN). A helical membrane pass occupies residues 314–334 (VATPIAASFGDLITLAILAWI). Residues 335–347 (SQGLYSCLETYYY) lie on the Cytoplasmic side of the membrane. The chain crosses the membrane as a helical span at residues 348–368 (ISPLVGVFFLALTPIWIIIAA). At 369-376 (KHPATRTV) the chain is on the extracellular side. Residues 377–397 (LHSGWEPVITAMVISSIGGLI) traverse the membrane as a helical segment. Residues 398-406 (LDTTVSDPN) are Cytoplasmic-facing. The helical transmembrane segment at 407 to 427 (LVGIVVYTPVINGIGGNLVAI) threads the bilayer. Topologically, residues 428–469 (QASRISTYLHLHSIPGELPDEPKGCYYPFRTFFGPGVNNKSA) are extracellular. Residues 470–490 (QVLLLLVIPGHLIFLYTIHLM) traverse the membrane as a helical segment. Residues 491–498 (KSGHTSLT) are Cytoplasmic-facing. Residues 499 to 519 (IIFIVVYLFGAVLQVFTLLWI) form a helical membrane-spanning segment. Over 520–543 (ADWMVHHFWRKGKDPDSFSIPYLT) the chain is Extracellular. Residues 544 to 564 (ALGDLLGTALLALSFHFLWLI) form a helical membrane-spanning segment. Topologically, residues 565 to 573 (GDRDGDVGD) are cytoplasmic.

The protein belongs to the SLC41A transporter family.

Its subcellular location is the cell membrane. It catalyses the reaction Mg(2+)(in) = Mg(2+)(out). The catalysed reaction is Mn(2+)(in) = Mn(2+)(out). The enzyme catalyses Co(2+)(in) = Co(2+)(out). It carries out the reaction Ni(2+)(in) = Ni(2+)(out). It catalyses the reaction Fe(2+)(in) = Fe(2+)(out). In terms of biological role, acts as a plasma-membrane magnesium transporter. Can also mediate the transport of other divalent metal cations in an order of Ba(2+) &gt; Ni(2+) &gt; Co(2+) &gt; Fe(2+) &gt; Mn(2+). This Homo sapiens (Human) protein is Solute carrier family 41 member 2 (SLC41A2).